The chain runs to 579 residues: Rho guanine nucleotide exchange factor 25 (579 aa).

2 disordered regions span residues 27-61 (AVPG…GERE) and 172-194 (VKAQ…EQKK). Positions 199 to 375 (RSMFVLSELV…CFVPKRCNDM (177 aa)) constitute a DH domain. Positions 317-338 (LGHRLQLSDLLIKPVQRIMKYQ) are important for binding to Rho GTPases. The 120-residue stretch at 380-499 (RLRGFEGKLT…ESQTNSLGRS (120 aa)) folds into the PH domain. Positions 472–498 (SQRDFLNALQSPIEYQRRESQTNSLGR) are sufficient to bind activated GNAQ. 2 disordered regions span residues 487–516 (QRRE…VSMH) and 546–579 (LSET…EDEL).

In terms of assembly, interacts with activated GNAQ and GNA11. Interacts with RHOA, CDC42 and RAC1. Interacts (via the DH domain) with POPDC1 (via the C-terminus cytoplasmic tail).

The protein localises to the cytoplasm. Its subcellular location is the myofibril. It is found in the sarcomere. The protein resides in the cell membrane. In terms of biological role, may play a role in actin cytoskeleton reorganization in different tissues since its activation induces formation of actin stress fibers. It works as a guanine nucleotide exchange factor for Rho family of small GTPases. Links specifically G alpha q/11-coupled receptors to RHOA activation. May be an important regulator of processes involved in axon and dendrite formation. In neurons seems to be an exchange factor primarily for RAC1. Involved in skeletal myogenesis. The polypeptide is Rho guanine nucleotide exchange factor 25 (Arhgef25) (Rattus norvegicus (Rat)).